The following is a 181-amino-acid chain: Ribulose bisphosphate carboxylase small subunit 3B, chloroplastic (181 aa).

A chloroplast-targeting transit peptide spans 1 to 54 (MASSMLSSAAVVTSPAQATMVAPFTGLKSSAAFPVTRKTNKDITSIASNGGRVS).

It belongs to the RuBisCO small chain family. Heterohexadecamer of 8 large and 8 small subunits.

The protein localises to the plastid. It is found in the chloroplast. RuBisCO catalyzes two reactions: the carboxylation of D-ribulose 1,5-bisphosphate, the primary event in carbon dioxide fixation, as well as the oxidative fragmentation of the pentose substrate. Both reactions occur simultaneously and in competition at the same active site. Although the small subunit is not catalytic it is essential for maximal activity. The chain is Ribulose bisphosphate carboxylase small subunit 3B, chloroplastic (RBCS-3B) from Arabidopsis thaliana (Mouse-ear cress).